Here is a 554-residue protein sequence, read N- to C-terminus: CTP synthase (554 aa).

The interval 1–265 (MTPLIFVTGG…DEIVIDQFKL (265 aa)) is amidoligase domain. Position 13 (Ser-13) interacts with CTP. Ser-13 is a binding site for UTP. ATP-binding positions include 14–19 (SLGKGI) and Asp-71. The Mg(2+) site is built by Asp-71 and Glu-139. CTP contacts are provided by residues 146-148 (DIE), 186-191 (KTKPTQ), and Lys-222. UTP-binding positions include 186–191 (KTKPTQ) and Lys-222. A Glutamine amidotransferase type-1 domain is found at 292 to 545 (TIAVVGKYVD…VKAARARKAG (254 aa)). Gly-353 is a binding site for L-glutamine. Residue Cys-380 is the Nucleophile; for glutamine hydrolysis of the active site. L-glutamine-binding positions include 381-384 (YGMQ), Glu-404, and Arg-471. Active-site residues include His-518 and Glu-520.

Belongs to the CTP synthase family. As to quaternary structure, homotetramer.

The enzyme catalyses UTP + L-glutamine + ATP + H2O = CTP + L-glutamate + ADP + phosphate + 2 H(+). It catalyses the reaction L-glutamine + H2O = L-glutamate + NH4(+). The catalysed reaction is UTP + NH4(+) + ATP = CTP + ADP + phosphate + 2 H(+). The protein operates within pyrimidine metabolism; CTP biosynthesis via de novo pathway; CTP from UDP: step 2/2. Allosterically activated by GTP, when glutamine is the substrate; GTP has no effect on the reaction when ammonia is the substrate. The allosteric effector GTP functions by stabilizing the protein conformation that binds the tetrahedral intermediate(s) formed during glutamine hydrolysis. Inhibited by the product CTP, via allosteric rather than competitive inhibition. Its function is as follows. Catalyzes the ATP-dependent amination of UTP to CTP with either L-glutamine or ammonia as the source of nitrogen. Regulates intracellular CTP levels through interactions with the four ribonucleotide triphosphates. This chain is CTP synthase, found in Xylella fastidiosa (strain 9a5c).